Reading from the N-terminus, the 121-residue chain is Prefoldin subunit beta (121 aa).

Belongs to the prefoldin subunit beta family. Heterohexamer of two alpha and four beta subunits.

The protein resides in the cytoplasm. Functionally, molecular chaperone capable of stabilizing a range of proteins. Seems to fulfill an ATP-independent, HSP70-like function in archaeal de novo protein folding. The polypeptide is Prefoldin subunit beta (Caldivirga maquilingensis (strain ATCC 700844 / DSM 13496 / JCM 10307 / IC-167)).